The sequence spans 345 residues: S-adenosylmethionine:tRNA ribosyltransferase-isomerase (345 aa).

This sequence belongs to the QueA family. Monomer.

It localises to the cytoplasm. It carries out the reaction 7-aminomethyl-7-carbaguanosine(34) in tRNA + S-adenosyl-L-methionine = epoxyqueuosine(34) in tRNA + adenine + L-methionine + 2 H(+). It functions in the pathway tRNA modification; tRNA-queuosine biosynthesis. Its function is as follows. Transfers and isomerizes the ribose moiety from AdoMet to the 7-aminomethyl group of 7-deazaguanine (preQ1-tRNA) to give epoxyqueuosine (oQ-tRNA). This chain is S-adenosylmethionine:tRNA ribosyltransferase-isomerase, found in Helicobacter pylori (strain Shi470).